Here is a 207-residue protein sequence, read N- to C-terminus: Peptidyl-tRNA hydrolase (207 aa).

Tyrosine 14 lines the tRNA pocket. The active-site Proton acceptor is histidine 19. Residues tyrosine 64, asparagine 66, and asparagine 112 each coordinate tRNA.

The protein belongs to the PTH family. In terms of assembly, monomer.

The protein resides in the cytoplasm. It catalyses the reaction an N-acyl-L-alpha-aminoacyl-tRNA + H2O = an N-acyl-L-amino acid + a tRNA + H(+). Functionally, hydrolyzes ribosome-free peptidyl-tRNAs (with 1 or more amino acids incorporated), which drop off the ribosome during protein synthesis, or as a result of ribosome stalling. Catalyzes the release of premature peptidyl moieties from peptidyl-tRNA molecules trapped in stalled 50S ribosomal subunits, and thus maintains levels of free tRNAs and 50S ribosomes. The protein is Peptidyl-tRNA hydrolase of Rhodopseudomonas palustris (strain HaA2).